The sequence spans 336 residues: Holliday junction branch migration complex subunit RuvB (336 aa).

A large ATPase domain (RuvB-L) region spans residues 1 to 175 (MEKYSFESVQ…FGMSFRLQFY (175 aa)). Residues Leu-14, Arg-15, Gly-56, Lys-59, Thr-60, Thr-61, 122–124 (EDF), Arg-165, Tyr-175, and Arg-212 each bind ATP. Thr-60 contributes to the Mg(2+) binding site. Residues 176–253 (EPKELSAIVI…CVRYALNELG (78 aa)) are small ATPAse domain (RuvB-S). The head domain (RuvB-H) stretch occupies residues 256 to 336 (ELGFDELDLR…IPFLEQKGLF (81 aa)). 2 residues coordinate DNA: Arg-310 and Arg-315.

It belongs to the RuvB family. Homohexamer. Forms an RuvA(8)-RuvB(12)-Holliday junction (HJ) complex. HJ DNA is sandwiched between 2 RuvA tetramers; dsDNA enters through RuvA and exits via RuvB. An RuvB hexamer assembles on each DNA strand where it exits the tetramer. Each RuvB hexamer is contacted by two RuvA subunits (via domain III) on 2 adjacent RuvB subunits; this complex drives branch migration. In the full resolvosome a probable DNA-RuvA(4)-RuvB(12)-RuvC(2) complex forms which resolves the HJ.

The protein localises to the cytoplasm. It catalyses the reaction ATP + H2O = ADP + phosphate + H(+). The RuvA-RuvB-RuvC complex processes Holliday junction (HJ) DNA during genetic recombination and DNA repair, while the RuvA-RuvB complex plays an important role in the rescue of blocked DNA replication forks via replication fork reversal (RFR). RuvA specifically binds to HJ cruciform DNA, conferring on it an open structure. The RuvB hexamer acts as an ATP-dependent pump, pulling dsDNA into and through the RuvAB complex. RuvB forms 2 homohexamers on either side of HJ DNA bound by 1 or 2 RuvA tetramers; 4 subunits per hexamer contact DNA at a time. Coordinated motions by a converter formed by DNA-disengaged RuvB subunits stimulates ATP hydrolysis and nucleotide exchange. Immobilization of the converter enables RuvB to convert the ATP-contained energy into a lever motion, pulling 2 nucleotides of DNA out of the RuvA tetramer per ATP hydrolyzed, thus driving DNA branch migration. The RuvB motors rotate together with the DNA substrate, which together with the progressing nucleotide cycle form the mechanistic basis for DNA recombination by continuous HJ branch migration. Branch migration allows RuvC to scan DNA until it finds its consensus sequence, where it cleaves and resolves cruciform DNA. The polypeptide is Holliday junction branch migration complex subunit RuvB (Helicobacter hepaticus (strain ATCC 51449 / 3B1)).